The chain runs to 361 residues: MKVQRIEVENKPYPLYLLLDKEYQLIEPVMKFIKYLDNTGKSPNTIKAYCYHLKLLYEFMEQRGVILNDINFELLADFVGWLRYPSASNVIDLQSKKAIREETTVNTILNVVMSFLDYLSRLGEFKSIDVFKQAKGRNFKGFLHHVNKGRYQKNVLKLRVKKKQIRTLRSKEVKQIIDACHTKRDKLILMLMYEGGLRIGEVLSLRLEDIVTWDNQIHLTPRDVNVNEAYIKLRKERTIHVSKELMSLYTDYLIYEYSEELEHDYVFISLKEGYFGKPLKYQSVLDLVRRIVKRTGIEFTSHMLRHTHATQLIREGWDVAFVQKRLGHAHVQTTLNTYVHLSDQDMKNEFNKYLERKEHKK.

The 98-residue stretch at 23–120 (YQLIEPVMKF…VVMSFLDYLS (98 aa)) folds into the Core-binding (CB) domain. Positions 163-351 (KQIRTLRSKE…SDQDMKNEFN (189 aa)) constitute a Tyr recombinase domain. Active-site residues include R198, K232, H302, R305, and H328. The active-site O-(3'-phospho-DNA)-tyrosine intermediate is Y338.

It belongs to the 'phage' integrase family.

Its function is as follows. One of three proteins encoded by transposon Tn554 required for its transposition. The polypeptide is Transposase A from transposon Tn554 (tnpA1) (Staphylococcus aureus (strain Mu50 / ATCC 700699)).